We begin with the raw amino-acid sequence, 330 residues long: uncharacterized protein (330 aa).

H257 is a catalytic residue.

This sequence belongs to the IUNH family.

This is an uncharacterized protein from Schizosaccharomyces pombe (strain 972 / ATCC 24843) (Fission yeast).